Here is a 401-residue protein sequence, read N- to C-terminus: Imidazolonepropionase (401 aa).

The Fe(3+) site is built by His66 and His68. 2 residues coordinate Zn(2+): His66 and His68. 4-imidazolone-5-propanoate is bound by residues Arg75, Tyr138, and His171. Tyr138 provides a ligand contact to N-formimidoyl-L-glutamate. His236 serves as a coordination point for Fe(3+). His236 serves as a coordination point for Zn(2+). Gln239 is a binding site for 4-imidazolone-5-propanoate. Asp311 serves as a coordination point for Fe(3+). Position 311 (Asp311) interacts with Zn(2+). N-formimidoyl-L-glutamate-binding residues include Asn313 and Gly315. Thr316 is a 4-imidazolone-5-propanoate binding site.

It belongs to the metallo-dependent hydrolases superfamily. HutI family. Requires Zn(2+) as cofactor. The cofactor is Fe(3+).

The protein resides in the cytoplasm. It carries out the reaction 4-imidazolone-5-propanoate + H2O = N-formimidoyl-L-glutamate. It functions in the pathway amino-acid degradation; L-histidine degradation into L-glutamate; N-formimidoyl-L-glutamate from L-histidine: step 3/3. In terms of biological role, catalyzes the hydrolytic cleavage of the carbon-nitrogen bond in imidazolone-5-propanoate to yield N-formimidoyl-L-glutamate. It is the third step in the universal histidine degradation pathway. This Pseudomonas putida (strain ATCC 700007 / DSM 6899 / JCM 31910 / BCRC 17059 / LMG 24140 / F1) protein is Imidazolonepropionase.